The following is a 300-amino-acid chain: uncharacterized protein (300 aa).

3 Solcar repeats span residues 10 to 101 (ESQT…VKDF), 119 to 199 (GKAI…AKEY), and 212 to 294 (FQNF…LIPF). 6 consecutive transmembrane segments (helical) span residues 16 to 36 (IVGS…VDTI), 70 to 86 (ATSL…YKIV), 121 to 141 (AIMH…LLPL), 178 to 198 (TAAR…FAKE), 215 to 235 (FFTS…LDVI), and 275 to 295 (LTTG…IPFF).

The protein belongs to the mitochondrial carrier (TC 2.A.29) family.

The protein resides in the mitochondrion inner membrane. This is an uncharacterized protein from Schizosaccharomyces pombe (strain 972 / ATCC 24843) (Fission yeast).